We begin with the raw amino-acid sequence, 331 residues long: Mitochondrial respiration co-chaperone MRJ1 (331 aa).

The N-terminal 36 residues, 1 to 36 (MLSFQATVRPLAVSSRLHSPAAHIWRRNAHTAAMSD), are a transit peptide targeting the mitochondrion. The disordered stretch occupies residues 35–66 (SDDSLDQGSSSSYGDSASQPHLGKGKGRQDSL). A compositionally biased stretch (low complexity) spans 40 to 53 (DQGSSSSYGDSASQ). The region spanning 83-147 (DPFEVMALDR…SSRSAFLKTG (65 aa)) is the J domain. A disordered region spans residues 203–226 (DGSQGWRPYEDPSKGFSPPTSGPA). The IQ domain maps to 275–303 (RALAQARYEAATHGHIRREQIRRRVREAE).

This sequence belongs to the DnaJ family. Interacts with QCR2.

It localises to the mitochondrion. Functionally, mitochondrial co-chaperone required for ubiquinol-cytochrome c oxidoreductase (mitochondrial respiratory chain complex III) activity. In Cryptococcus neoformans var. grubii serotype A (strain H99 / ATCC 208821 / CBS 10515 / FGSC 9487) (Filobasidiella neoformans var. grubii), this protein is Mitochondrial respiration co-chaperone MRJ1.